The following is a 188-amino-acid chain: Elongation factor P (188 aa).

Belongs to the elongation factor P family.

Its subcellular location is the cytoplasm. It participates in protein biosynthesis; polypeptide chain elongation. Involved in peptide bond synthesis. Stimulates efficient translation and peptide-bond synthesis on native or reconstituted 70S ribosomes in vitro. Probably functions indirectly by altering the affinity of the ribosome for aminoacyl-tRNA, thus increasing their reactivity as acceptors for peptidyl transferase. The sequence is that of Elongation factor P from Methylobacterium radiotolerans (strain ATCC 27329 / DSM 1819 / JCM 2831 / NBRC 15690 / NCIMB 10815 / 0-1).